A 369-amino-acid polypeptide reads, in one-letter code: Quinolinate synthase (369 aa).

2 residues coordinate iminosuccinate: His-47 and Ser-64. A [4Fe-4S] cluster-binding site is contributed by Cys-111. Residues 142–144 and Ser-163 contribute to the iminosuccinate site; that span reads YVN. Cys-231 is a binding site for [4Fe-4S] cluster. Residues 257–259 and Thr-274 contribute to the iminosuccinate site; that span reads HPE. Cys-321 contributes to the [4Fe-4S] cluster binding site.

The protein belongs to the quinolinate synthase family. Type 3 subfamily. [4Fe-4S] cluster serves as cofactor.

The protein localises to the cytoplasm. The catalysed reaction is iminosuccinate + dihydroxyacetone phosphate = quinolinate + phosphate + 2 H2O + H(+). It functions in the pathway cofactor biosynthesis; NAD(+) biosynthesis; quinolinate from iminoaspartate: step 1/1. Its function is as follows. Catalyzes the condensation of iminoaspartate with dihydroxyacetone phosphate to form quinolinate. The chain is Quinolinate synthase from Bacillus pumilus (strain SAFR-032).